The chain runs to 1165 residues: ATP-dependent helicase/deoxyribonuclease subunit B (1165 aa).

The UvrD-like helicase ATP-binding domain occupies 1-324 (MRFIIGGAGS…LVEAQNRREE (324 aa)). 6-13 (GGAGSGKS) lines the ATP pocket. In terms of domain architecture, UvrD-like helicase C-terminal spans 282–597 (PLRFRGAPEL…IVGTVERSRH (316 aa)). Positions 803, 1121, 1124, and 1130 each coordinate [4Fe-4S] cluster.

It belongs to the helicase family. AddB/RexB type 1 subfamily. In terms of assembly, heterodimer of AddA and AddB. It depends on Mg(2+) as a cofactor. [4Fe-4S] cluster is required as a cofactor.

In terms of biological role, the heterodimer acts as both an ATP-dependent DNA helicase and an ATP-dependent, dual-direction single-stranded exonuclease. Recognizes the chi site generating a DNA molecule suitable for the initiation of homologous recombination. The AddB subunit has 5' -&gt; 3' nuclease activity but not helicase activity. In Symbiobacterium thermophilum (strain DSM 24528 / JCM 14929 / IAM 14863 / T), this protein is ATP-dependent helicase/deoxyribonuclease subunit B.